The sequence spans 318 residues: Ribose-phosphate pyrophosphokinase (318 aa).

ATP is bound by residues 43–45 (DGE) and 102–103 (RQ). The Mg(2+) site is built by His-136 and Asp-176. The active site involves Lys-199. Residues Arg-201, Asp-225, and 229 to 233 (DTAGT) contribute to the D-ribose 5-phosphate site.

The protein belongs to the ribose-phosphate pyrophosphokinase family. Class I subfamily. Homohexamer. The cofactor is Mg(2+).

The protein localises to the cytoplasm. The catalysed reaction is D-ribose 5-phosphate + ATP = 5-phospho-alpha-D-ribose 1-diphosphate + AMP + H(+). It participates in metabolic intermediate biosynthesis; 5-phospho-alpha-D-ribose 1-diphosphate biosynthesis; 5-phospho-alpha-D-ribose 1-diphosphate from D-ribose 5-phosphate (route I): step 1/1. In terms of biological role, involved in the biosynthesis of the central metabolite phospho-alpha-D-ribosyl-1-pyrophosphate (PRPP) via the transfer of pyrophosphoryl group from ATP to 1-hydroxyl of ribose-5-phosphate (Rib-5-P). This is Ribose-phosphate pyrophosphokinase from Listeria ivanovii.